Here is a 227-residue protein sequence, read N- to C-terminus: Holliday junction branch migration complex subunit RuvA (227 aa).

The interval 1 to 64 (MFESISGILT…EDALRLFGFS (64 aa)) is domain I. Residues 65 to 143 (NVQERTLFLS…LTDAASCAQS (79 aa)) are domain II. Residues 144-158 (QTDDRAAHPSNLGCA) are flexible linker. A domain III region spans residues 159-227 (PHAREIEDLV…HPHAVAPAAE (69 aa)).

Belongs to the RuvA family. In terms of assembly, homotetramer. Forms an RuvA(8)-RuvB(12)-Holliday junction (HJ) complex. HJ DNA is sandwiched between 2 RuvA tetramers; dsDNA enters through RuvA and exits via RuvB. An RuvB hexamer assembles on each DNA strand where it exits the tetramer. Each RuvB hexamer is contacted by two RuvA subunits (via domain III) on 2 adjacent RuvB subunits; this complex drives branch migration. In the full resolvosome a probable DNA-RuvA(4)-RuvB(12)-RuvC(2) complex forms which resolves the HJ.

It localises to the cytoplasm. The RuvA-RuvB-RuvC complex processes Holliday junction (HJ) DNA during genetic recombination and DNA repair, while the RuvA-RuvB complex plays an important role in the rescue of blocked DNA replication forks via replication fork reversal (RFR). RuvA specifically binds to HJ cruciform DNA, conferring on it an open structure. The RuvB hexamer acts as an ATP-dependent pump, pulling dsDNA into and through the RuvAB complex. HJ branch migration allows RuvC to scan DNA until it finds its consensus sequence, where it cleaves and resolves the cruciform DNA. The polypeptide is Holliday junction branch migration complex subunit RuvA (Treponema pallidum (strain Nichols)).